Reading from the N-terminus, the 3330-residue chain is Laminin subunit alpha-3 (3330 aa).

Residues 1 to 31 (MAVALGRAPRSLPLLLTLLLLLLLRMSPSWS) form the signal peptide. A Laminin N-terminal domain is found at 40–295 (SSRSLHPPYF…SIKDISVGGR (256 aa)). N-linked (GlcNAc...) asparagine glycosylation is present at Asn139. The tract at residues 295–725 (RCVCNGHAEA…NNYYFPDLHH (431 aa)) is domain V. Disulfide bonds link Cys296-Cys305, Cys298-Cys316, Cys318-Cys327, Cys330-Cys350, Cys353-Cys362, Cys355-Cys387, Cys390-Cys399, Cys402-Cys420, Cys423-Cys433, Cys425-Cys440, Cys442-Cys451, Cys454-Cys464, Cys488-Cys500, Cys490-Cys506, Cys508-Cys517, Cys520-Cys530, Cys533-Cys545, Cys535-Cys552, Cys554-Cys563, Cys566-Cys583, Cys628-Cys642, Cys630-Cys649, Cys651-Cys660, Cys663-Cys678, Cys681-Cys693, Cys683-Cys700, and Cys702-Cys711. 8 consecutive Laminin EGF-like domains span residues 296-350 (CVCN…HNEC), 353-420 (CNCH…LHGC), 423-464 (CSCD…FPFC), 488-530 (CDCN…FPIC), 533-576 (CQCS…FPYC), 582-625 (VCHP…PRGC), 628-678 (CQCH…YFGC), and 681-725 (CQCD…DLHH). N-linked (GlcNAc...) asparagine glycosylation occurs at Asn445. Residues 793 to 1262 (TEAISGRITL…VAFYHNGAIP (470 aa)) are domain IV 1 (domain IV B). The segment at 1263–1462 (CECDPAGTAG…CFCFGVNTDC (200 aa)) is domain III B. 12 disulfide bridges follow: Cys1309–Cys1316, Cys1311–Cys1323, Cys1325–Cys1334, Cys1337–Cys1350, Cys1353–Cys1368, Cys1355–Cys1375, Cys1377–Cys1386, Cys1389–Cys1399, Cys1402–Cys1414, Cys1404–Cys1421, Cys1423–Cys1432, and Cys1435–Cys1450. Laminin EGF-like domains lie at 1309–1352 (CNCG…GCDV), 1353–1401 (CNCS…ECVP), and 1402–1452 (CSCN…GCTK). Asn1354 carries an N-linked (GlcNAc...) asparagine glycan. In terms of domain architecture, Laminin EGF-like 12; first part spans 1453-1462 (CFCFGVNTDC). A Laminin IV type A domain is found at 1466-1650 (HKQRAKFVDM…SGPRAHLVEM (185 aa)). The region spanning 1651-1683 (CACPPDYTGDSCQGCRPGYYWDNKSLPVGRCVP) is the Laminin EGF-like 12; second part domain. The segment at 1651–1818 (CACPPDYTGD…DGSPAEECDD (168 aa)) is domain III A. Asn1673 carries an N-linked (GlcNAc...) asparagine glycan. Cystine bridges form between Cys1684/Cys1693, Cys1686/Cys1700, Cys1703/Cys1712, Cys1715/Cys1728, Cys1731/Cys1743, Cys1733/Cys1752, Cys1754/Cys1763, and Cys1766/Cys1781. 2 consecutive Laminin EGF-like domains span residues 1684–1730 (CNCN…SCRV) and 1731–1783 (CPCP…SCQP). Residues 1784–1818 (CNCNSNGQLGPCDPLTGDCVNQEPKDGSPAEECDD) enclose the Laminin EGF-like 15; truncated domain. The domain II and I stretch occupies residues 1819–2385 (CDSCVMTLLN…ARDAANKVAI (567 aa)). Coiled coils occupy residues 1851-1980 (TGAL…LRSR), 2012-2057 (VENN…HENE), 2088-2165 (LLQT…GDEL), and 2211-2238 (KRAKTLSSDSEELLNEAKMTQKRLQQVS). Residue Asn2159 is glycosylated (N-linked (GlcNAc...) asparagine). N-linked (GlcNAc...) asparagine glycosylation is present at Asn2261. Positions 2274–2276 (RGD) match the Cell attachment site motif. A coiled-coil region spans residues 2318 to 2383 (SARREDFSKA…QQARDAANKV (66 aa)). N-linked (GlcNAc...) asparagine glycans are attached at residues Asn2332, Asn2361, Asn2498, Asn2580, and Asn2747. Laminin G-like domains are found at residues 2386 to 2587 (PMRF…VEPC), 2594 to 2756 (SDKN…TKKC), 2763 to 2923 (VRTA…LGGC), 2983 to 3147 (ALQF…VSPC), and 3154 to 3327 (KGIY…LNGC). 3 disulfide bridges follow: Cys2557–Cys2587, Cys2733–Cys2756, and Cys2891–Cys2923. N-linked (GlcNAc...) asparagine glycosylation occurs at Asn3094. An intrachain disulfide couples Cys3124 to Cys3147. Asn3270 is a glycosylation site (N-linked (GlcNAc...) asparagine). Residues Cys3299 and Cys3327 are joined by a disulfide bond.

Laminin is a complex glycoprotein, consisting of three different polypeptide chains (alpha, beta, gamma), which are bound to each other by disulfide bonds into a cross-shaped molecule comprising one long and three short arms with globules at each end. Alpha-3 is a subunit of laminin-5 (laminin-332 or epiligrin/kalinin/nicein), laminin-6 (laminin-311 or K-laminin) and laminin-7 (laminin-321 or KS-laminin). As to expression, basal membrane of the upper alimentary tract and urinary and nasal epithelia, salivary glands and teeth (both variants). Isoform A is predominantly expressed in skin, hair follicles and developing neurons of the trigeminal ganglion. Isoform B was found in bronchi, alveoli, stomach, intestinal crypts, whisker pads, CNS, telencephalic neuroectoderm, thalamus, Rathke pouch and periventricular subependymal germinal layer.

It is found in the secreted. Its subcellular location is the extracellular space. The protein localises to the extracellular matrix. The protein resides in the basement membrane. Functionally, binding to cells via a high affinity receptor, laminin is thought to mediate the attachment, migration and organization of cells into tissues during embryonic development by interacting with other extracellular matrix components. In terms of biological role, laminin-5 is thought to be involved in (1) cell adhesion via integrin alpha-3/beta-1 in focal adhesion and integrin alpha-6/beta-4 in hemidesmosomes, (2) signal transduction via tyrosine phosphorylation of pp125-FAK and p80, (3) differentiation of keratinocytes. The chain is Laminin subunit alpha-3 (Lama3) from Mus musculus (Mouse).